Here is a 266-residue protein sequence, read N- to C-terminus: 5'-nucleotidase SurE (266 aa).

A divalent metal cation-binding residues include Asp8, Asp9, Ser39, and Asn93.

Belongs to the SurE nucleotidase family. The cofactor is a divalent metal cation.

Its subcellular location is the cytoplasm. It carries out the reaction a ribonucleoside 5'-phosphate + H2O = a ribonucleoside + phosphate. Its function is as follows. Nucleotidase that shows phosphatase activity on nucleoside 5'-monophosphates. The sequence is that of 5'-nucleotidase SurE from Thermococcus gammatolerans (strain DSM 15229 / JCM 11827 / EJ3).